Consider the following 101-residue polypeptide: Small ribosomal subunit protein uS14 (101 aa).

Belongs to the universal ribosomal protein uS14 family. As to quaternary structure, part of the 30S ribosomal subunit. Contacts proteins S3 and S10.

Binds 16S rRNA, required for the assembly of 30S particles and may also be responsible for determining the conformation of the 16S rRNA at the A site. In Shewanella sp. (strain MR-4), this protein is Small ribosomal subunit protein uS14.